Consider the following 137-residue polypeptide: Large-conductance mechanosensitive channel (137 aa).

Helical transmembrane passes span Ala-9–Phe-29 and Ile-79–Ile-99.

The protein belongs to the MscL family. Homopentamer.

The protein localises to the cell inner membrane. In terms of biological role, channel that opens in response to stretch forces in the membrane lipid bilayer. May participate in the regulation of osmotic pressure changes within the cell. The sequence is that of Large-conductance mechanosensitive channel from Pseudomonas paraeruginosa (strain DSM 24068 / PA7) (Pseudomonas aeruginosa (strain PA7)).